Here is a 105-residue protein sequence, read N- to C-terminus: SAGA-associated factor 11 (105 aa).

The SGF11-type zinc-finger motif lies at 76-97 (FRCPNCSRDLSANRFAAHLERC).

It belongs to the SGF11 family. In terms of assembly, component of the 1.8 MDa SAGA transcription coactivator-HAT complex. SAGA is built of 5 distinct domains with specialized functions. Within the SAGA complex, SUS1, SGF11, SGF73 and UBP8 form an additional subcomplex of SAGA called the DUB module (deubiquitination module). Interacts directly with SGF73, SUS1 and UBP8.

It is found in the nucleus. In terms of biological role, functions as a component of the transcription regulatory histone acetylation (HAT) complex SAGA. At the promoters, SAGA is required for recruitment of the basal transcription machinery. It influences RNA polymerase II transcriptional activity through different activities such as TBP interaction and promoter selectivity, interaction with transcription activators, and chromatin modification through histone acetylation and deubiquitination. SAGA acetylates nucleosomal histone H3 to some extent (to form H3K9ac, H3K14ac, H3K18ac and H3K23ac). SAGA interacts with DNA via upstream activating sequences (UASs). Involved in transcriptional regulation of a subset of SAGA-regulated genes. Within the SAGA complex, participates in a subcomplex, that specifically deubiquitinates histones H2B. The protein is SAGA-associated factor 11 of Eremothecium gossypii (strain ATCC 10895 / CBS 109.51 / FGSC 9923 / NRRL Y-1056) (Yeast).